A 178-amino-acid polypeptide reads, in one-letter code: CDP-diacylglycerol--glycerol-3-phosphate 3-phosphatidyltransferase (178 aa).

A run of 4 helical transmembrane segments spans residues 5-25 (PNYL…LFYI), 32-52 (KLGA…GYIA), 61-81 (FGKM…TIML), and 145-165 (IIYL…LTII).

It belongs to the CDP-alcohol phosphatidyltransferase class-I family.

The protein resides in the cell membrane. It carries out the reaction a CDP-1,2-diacyl-sn-glycerol + sn-glycerol 3-phosphate = a 1,2-diacyl-sn-glycero-3-phospho-(1'-sn-glycero-3'-phosphate) + CMP + H(+). The protein operates within phospholipid metabolism; phosphatidylglycerol biosynthesis; phosphatidylglycerol from CDP-diacylglycerol: step 1/2. Functionally, this protein catalyzes the committed step to the synthesis of the acidic phospholipids. The sequence is that of CDP-diacylglycerol--glycerol-3-phosphate 3-phosphatidyltransferase (pgsA) from Rickettsia typhi (strain ATCC VR-144 / Wilmington).